The chain runs to 344 residues: Dihydroorotase (344 aa).

Zn(2+) is bound by residues His-13 and His-15. Substrate-binding positions include 15–17 (HLR) and Asn-41. Zn(2+)-binding residues include Lys-98, His-135, and His-173. Position 98 is an N6-carboxylysine (Lys-98). His-135 is a binding site for substrate. Position 218 (Leu-218) interacts with substrate. Residue Asp-247 participates in Zn(2+) binding. Asp-247 is a catalytic residue. Positions 251 and 263 each coordinate substrate.

This sequence belongs to the metallo-dependent hydrolases superfamily. DHOase family. Class II DHOase subfamily. As to quaternary structure, homodimer. Zn(2+) is required as a cofactor.

It catalyses the reaction (S)-dihydroorotate + H2O = N-carbamoyl-L-aspartate + H(+). Its pathway is pyrimidine metabolism; UMP biosynthesis via de novo pathway; (S)-dihydroorotate from bicarbonate: step 3/3. In terms of biological role, catalyzes the reversible cyclization of carbamoyl aspartate to dihydroorotate. The polypeptide is Dihydroorotase (Neisseria gonorrhoeae (strain NCCP11945)).